The primary structure comprises 326 residues: DNA-directed RNA polymerase subunit alpha (326 aa).

The interval 1–231 is alpha N-terminal domain (alpha-NTD); the sequence is MQTNLLKPKI…DQLVVFAALE (231 aa). The segment at 247-326 is alpha C-terminal domain (alpha-CTD); it reads VDPMLMRPVD…ESWPPANLEK (80 aa).

It belongs to the RNA polymerase alpha chain family. In terms of assembly, homodimer. The RNAP catalytic core consists of 2 alpha, 1 beta, 1 beta' and 1 omega subunit. When a sigma factor is associated with the core the holoenzyme is formed, which can initiate transcription.

It carries out the reaction RNA(n) + a ribonucleoside 5'-triphosphate = RNA(n+1) + diphosphate. Functionally, DNA-dependent RNA polymerase catalyzes the transcription of DNA into RNA using the four ribonucleoside triphosphates as substrates. The polypeptide is DNA-directed RNA polymerase subunit alpha (Polynucleobacter asymbioticus (strain DSM 18221 / CIP 109841 / QLW-P1DMWA-1) (Polynucleobacter necessarius subsp. asymbioticus)).